Here is a 361-residue protein sequence, read N- to C-terminus: Phospho-N-acetylmuramoyl-pentapeptide-transferase (361 aa).

Helical transmembrane passes span 28-48 (LAALTALSISFLIGPAMIRSL), 73-93 (TMGGALILMAVIITTLLWADL), 97-117 (YIWLVLLTTLGFGAIGWVDDY), 134-154 (FFWQSIIALLVAVYLAMTAEL), 168-188 (VAIPLGSFLFIILTYLVIVGS), 200-220 (GLAIMPTVMISGALAIFAYVA), 237-257 (AGELAVFCGALAGAGLAFLWF), 264-284 (VFMGDVGALALGAALGVITVI), 289-309 (IVLVIMGGVFVMEALSVMIQV), and 338-358 (QVVVRFWIITIILVLIGLSTL).

It belongs to the glycosyltransferase 4 family. MraY subfamily. Mg(2+) serves as cofactor.

The protein localises to the cell inner membrane. The catalysed reaction is UDP-N-acetyl-alpha-D-muramoyl-L-alanyl-gamma-D-glutamyl-meso-2,6-diaminopimeloyl-D-alanyl-D-alanine + di-trans,octa-cis-undecaprenyl phosphate = di-trans,octa-cis-undecaprenyl diphospho-N-acetyl-alpha-D-muramoyl-L-alanyl-D-glutamyl-meso-2,6-diaminopimeloyl-D-alanyl-D-alanine + UMP. It functions in the pathway cell wall biogenesis; peptidoglycan biosynthesis. Its function is as follows. Catalyzes the initial step of the lipid cycle reactions in the biosynthesis of the cell wall peptidoglycan: transfers peptidoglycan precursor phospho-MurNAc-pentapeptide from UDP-MurNAc-pentapeptide onto the lipid carrier undecaprenyl phosphate, yielding undecaprenyl-pyrophosphoryl-MurNAc-pentapeptide, known as lipid I. This chain is Phospho-N-acetylmuramoyl-pentapeptide-transferase, found in Nitrosomonas eutropha (strain DSM 101675 / C91 / Nm57).